Here is a 214-residue protein sequence, read N- to C-terminus: Ribonuclease HII (214 aa).

The RNase H type-2 domain occupies 26-214 (EIVCGVDEAG…PVREAFDLIR (189 aa)). Positions 32, 33, and 124 each coordinate a divalent metal cation.

This sequence belongs to the RNase HII family. Requires Mn(2+) as cofactor. Mg(2+) serves as cofactor.

The protein resides in the cytoplasm. The enzyme catalyses Endonucleolytic cleavage to 5'-phosphomonoester.. Endonuclease that specifically degrades the RNA of RNA-DNA hybrids. The sequence is that of Ribonuclease HII from Burkholderia pseudomallei (strain 668).